The following is a 361-amino-acid chain: Probable cysteine protease RD19B (361 aa).

The N-terminal stretch at 1 to 24 (MDYHLRVLFSVSLIFVFVSVSVCG) is a signal peptide. Residues 25 to 131 (DEDVLIRQVV…NQAPILPTQN (107 aa)) constitute a propeptide, activation peptide. Disulfide bonds link Cys153–Cys203 and Cys187–Cys237. Residue Cys156 is part of the active site. An N-linked (GlcNAc...) asparagine glycan is attached at Asn250. Cys293 and Cys347 are disulfide-bonded. Active-site residues include His299 and Asn326.

Belongs to the peptidase C1 family.

The protein localises to the lytic vacuole. In terms of biological role, probable thiol protease. The protein is Probable cysteine protease RD19B of Arabidopsis thaliana (Mouse-ear cress).